A 145-amino-acid chain; its full sequence is UPF0179 protein Maeo_1037 (145 aa).

Belongs to the UPF0179 family.

The chain is UPF0179 protein Maeo_1037 from Methanococcus aeolicus (strain ATCC BAA-1280 / DSM 17508 / OCM 812 / Nankai-3).